We begin with the raw amino-acid sequence, 1311 residues long: AF4/FMR2 family member 2 (1311 aa).

Disordered regions lie at residues 94–187 (LVGI…LTQD), 204–229 (PQIG…GEDA), and 377–417 (TAGH…TKSV). Polar residues predominate over residues 101 to 111 (SVPQNPNNKNE). Over residues 155 to 164 (SKPEWSRDSH) the composition is skewed to basic and acidic residues. A compositionally biased stretch (polar residues) spans 165–187 (NPSTVLASQASGQPNKMQTLTQD). Polar residues-rich tracts occupy residues 377 to 396 (TAGH…SQHL) and 403 to 417 (QKWN…TKSV). A Phosphoserine modification is found at S430. Disordered regions lie at residues 457–530 (KAKP…KWQL), 574–726 (TNAS…DQEE), 818–867 (SLHA…IPEK), and 881–943 (PPCI…DKNI). The span at 465 to 477 (VNPPLATPQPPPA) shows a compositional bias: pro residues. Over residues 478-491 (VQASGGSGSSSESE) the composition is skewed to low complexity. T517 carries the post-translational modification Phosphothreonine. Residues 582–597 (EPKERPLLSLIREKAR) are compositionally biased toward basic and acidic residues. The segment covering 615-625 (STTSETVSQRT) has biased composition (polar residues). Over residues 655 to 668 (PKEKESVELHDPPR) the composition is skewed to basic and acidic residues. Residues 669-679 (GRNKATAHKPA) show a composition bias toward basic residues. The span at 857–867 (PIEVAEKIPEK) shows a compositional bias: basic and acidic residues. Composition is skewed to pro residues over residues 883–892 (CISPAPPHKP) and 913–922 (FPPPLSPLPE).

Belongs to the AF4 family. As to expression, brain (most abundant in hippocampus and amygdala), placenta and lung.

Its subcellular location is the nucleus speckle. In terms of biological role, RNA-binding protein. Might be involved in alternative splicing regulation through an interaction with G-quartet RNA structure. The protein is AF4/FMR2 family member 2 of Homo sapiens (Human).